The following is a 299-amino-acid chain: Protein N-terminal and lysine N-methyltransferase EFM7 (299 aa).

Residues W74, G100 to G102, D122, W155, and S178 contribute to the S-adenosyl-L-methionine site.

The protein belongs to the class I-like SAM-binding methyltransferase superfamily. EFM7 family.

It localises to the cytoplasm. S-adenosyl-L-methionine-dependent protein methyltransferase that trimethylates the N-terminal glycine 'Gly-2' of elongation factor 1-alpha, before also catalyzing the mono- and dimethylation of 'Lys-3'. This is Protein N-terminal and lysine N-methyltransferase EFM7 from Cryptococcus neoformans var. neoformans serotype D (strain B-3501A) (Filobasidiella neoformans).